The sequence spans 447 residues: Probable butyrate:acetyl-CoA coenzyme A-transferase (447 aa).

Residue 220–224 (GIGGT) coordinates CoA. The active-site 5-glutamyl coenzyme A thioester intermediate is the Glu245. The CoA site is built by Ile320 and Gly343.

This sequence belongs to the acetyl-CoA hydrolase/transferase family.

The protein resides in the cytoplasm. It catalyses the reaction butanoate + acetyl-CoA = butanoyl-CoA + acetate. The protein operates within lipid metabolism; butanoate metabolism. Functionally, coenzyme A-transferase that converts butyrate to butyryl-CoA. Involved in the syntrophic growth of S.wolfei on butyrate in cooperation with methanogens or an appropriate hydrogen-scavenging bacterium, as part of the butyrate oxidation pathway. This is Probable butyrate:acetyl-CoA coenzyme A-transferase from Syntrophomonas wolfei subsp. wolfei (strain DSM 2245B / Goettingen).